The primary structure comprises 402 residues: Multidrug resistance protein MdtH (402 aa).

Helical transmembrane passes span 13-33, 34-54, 99-116, 139-159, 165-185, 214-234, 243-263, 277-297, 300-320, 340-360, and 368-388; these read YFLL…FPLI, SIRF…ALGL, PWLL…GTLF, LLMM…SWLL, LVCA…AWLL, VLTL…LPIM, AAVK…LYPI, LMAG…VSSV, LFVL…ARET, LGLA…FDSG, and LPWV…WWQF.

Belongs to the major facilitator superfamily. DHA1 family. MdtH (TC 2.A.1.2.21) subfamily.

Its subcellular location is the cell inner membrane. In Enterobacter sp. (strain 638), this protein is Multidrug resistance protein MdtH.